The primary structure comprises 103 residues: Large ribosomal subunit protein bL21 (103 aa).

This sequence belongs to the bacterial ribosomal protein bL21 family. In terms of assembly, part of the 50S ribosomal subunit. Contacts protein L20.

Its function is as follows. This protein binds to 23S rRNA in the presence of protein L20. This Glaesserella parasuis serovar 5 (strain SH0165) (Haemophilus parasuis) protein is Large ribosomal subunit protein bL21.